The following is a 317-amino-acid chain: 4-hydroxy-3-methylbut-2-enyl diphosphate reductase (317 aa).

Residue C12 participates in [4Fe-4S] cluster binding. (2E)-4-hydroxy-3-methylbut-2-enyl diphosphate-binding residues include H41 and H74. Positions 41 and 74 each coordinate dimethylallyl diphosphate. Residues H41 and H74 each coordinate isopentenyl diphosphate. A [4Fe-4S] cluster-binding site is contributed by C97. (2E)-4-hydroxy-3-methylbut-2-enyl diphosphate is bound at residue H125. H125 provides a ligand contact to dimethylallyl diphosphate. Residue H125 coordinates isopentenyl diphosphate. E127 functions as the Proton donor in the catalytic mechanism. Position 168 (T168) interacts with (2E)-4-hydroxy-3-methylbut-2-enyl diphosphate. C198 lines the [4Fe-4S] cluster pocket. (2E)-4-hydroxy-3-methylbut-2-enyl diphosphate-binding residues include S226, S227, N228, and S270. The dimethylallyl diphosphate site is built by S226, S227, N228, and S270. Isopentenyl diphosphate-binding residues include S226, S227, N228, and S270.

Belongs to the IspH family. As to quaternary structure, homodimer. [4Fe-4S] cluster is required as a cofactor.

The catalysed reaction is isopentenyl diphosphate + 2 oxidized [2Fe-2S]-[ferredoxin] + H2O = (2E)-4-hydroxy-3-methylbut-2-enyl diphosphate + 2 reduced [2Fe-2S]-[ferredoxin] + 2 H(+). The enzyme catalyses dimethylallyl diphosphate + 2 oxidized [2Fe-2S]-[ferredoxin] + H2O = (2E)-4-hydroxy-3-methylbut-2-enyl diphosphate + 2 reduced [2Fe-2S]-[ferredoxin] + 2 H(+). The protein operates within isoprenoid biosynthesis; dimethylallyl diphosphate biosynthesis; dimethylallyl diphosphate from (2E)-4-hydroxy-3-methylbutenyl diphosphate: step 1/1. It participates in isoprenoid biosynthesis; isopentenyl diphosphate biosynthesis via DXP pathway; isopentenyl diphosphate from 1-deoxy-D-xylulose 5-phosphate: step 6/6. Catalyzes the conversion of 1-hydroxy-2-methyl-2-(E)-butenyl 4-diphosphate (HMBPP) into a mixture of isopentenyl diphosphate (IPP) and dimethylallyl diphosphate (DMAPP). Acts in the terminal step of the DOXP/MEP pathway for isoprenoid precursor biosynthesis. The chain is 4-hydroxy-3-methylbut-2-enyl diphosphate reductase from Serratia proteamaculans (strain 568).